The following is a 371-amino-acid chain: Cytochrome b (371 aa).

4 helical membrane-spanning segments follow: residues 25 to 45 (FGSM…FLAV), 69 to 90 (WMMQ…YIHI), 105 to 125 (WMSG…GYIL), and 170 to 190 (FFAL…LHIL). Heme b is bound by residues H75 and H89. Positions 174 and 188 each coordinate heme b. Position 193 (H193) interacts with a ubiquinone. The next 4 membrane-spanning stretches (helical) occupy residues 218-238 (YKDL…TFFL), 280-300 (LGGA…PFTH), 312-332 (MSQL…WAAT), and 339-358 (FMMI…ISNP).

It belongs to the cytochrome b family. The cytochrome bc1 complex contains 3 respiratory subunits (MT-CYB, CYC1 and UQCRFS1), 2 core proteins (UQCRC1 and UQCRC2) and probably 6 low-molecular weight proteins. Heme b serves as cofactor.

The protein localises to the mitochondrion inner membrane. Its function is as follows. Component of the ubiquinol-cytochrome c reductase complex (complex III or cytochrome b-c1 complex) that is part of the mitochondrial respiratory chain. The b-c1 complex mediates electron transfer from ubiquinol to cytochrome c. Contributes to the generation of a proton gradient across the mitochondrial membrane that is then used for ATP synthesis. The protein is Cytochrome b (MT-CYB) of Casarea dussumieri (Round Island keel-scaled boa).